We begin with the raw amino-acid sequence, 120 residues long: Large ribosomal subunit protein uL18 (120 aa).

The protein belongs to the universal ribosomal protein uL18 family. In terms of assembly, part of the 50S ribosomal subunit; part of the 5S rRNA/L5/L18/L25 subcomplex. Contacts the 5S and 23S rRNAs.

In terms of biological role, this is one of the proteins that bind and probably mediate the attachment of the 5S RNA into the large ribosomal subunit, where it forms part of the central protuberance. The chain is Large ribosomal subunit protein uL18 from Rippkaea orientalis (strain PCC 8801 / RF-1) (Cyanothece sp. (strain PCC 8801)).